Here is a 572-residue protein sequence, read N- to C-terminus: Probable lysosomal cobalamin transporter (572 aa).

9 helical membrane passes run 8 to 28, 40 to 60, 95 to 115, 145 to 165, 188 to 208, 314 to 334, 374 to 394, 421 to 441, and 499 to 519; these read VIWF…SVFI, FVTF…MLLP, IIYY…IPFA, TLTF…APMM, AFTF…AFYT, GGFC…MTVV, IIFA…VVAV, AVLT…LVPG, and VALN…LFLA. Residues 522–544 are disordered; that stretch reads GRRRGRGRESVSKHQKKRQSYMR.

The protein belongs to the LIMR family. LMBRD1 subfamily.

The protein resides in the lysosome membrane. Its function is as follows. Probable lysosomal cobalamin transporter. Required to export cobalamin from lysosomes allowing its conversion to cofactors. In Aspergillus fumigatus (strain ATCC MYA-4609 / CBS 101355 / FGSC A1100 / Af293) (Neosartorya fumigata), this protein is Probable lysosomal cobalamin transporter.